Reading from the N-terminus, the 575-residue chain is Adenine deaminase (575 aa).

It belongs to the metallo-dependent hydrolases superfamily. Adenine deaminase family. It depends on Mn(2+) as a cofactor.

The catalysed reaction is adenine + H2O + H(+) = hypoxanthine + NH4(+). The chain is Adenine deaminase from Nitratidesulfovibrio vulgaris (strain ATCC 29579 / DSM 644 / CCUG 34227 / NCIMB 8303 / VKM B-1760 / Hildenborough) (Desulfovibrio vulgaris).